A 464-amino-acid chain; its full sequence is FERM domain-containing protein 8 (464 aa).

An N-acetylmethionine modification is found at Met1. The disordered stretch occupies residues 1–22 (MDGTEGSAGQPGPAERSHRSSV). Residue Ser24 is modified to Phosphoserine. Residues 30–376 (ADVLVYLADD…YCIELSQAAE (347 aa)) form the FERM domain. The disordered stretch occupies residues 376–408 (EPAGPQDSATGSPSDPSSSLAPVQRPKLRRQGS). A phosphoserine mark is found at Ser383, Ser387, and Ser408. Thr419 is modified (phosphothreonine). Residues Ser439 and Ser446 each carry the phosphoserine modification.

Interacts with iRhom1/RHBDF1 and iRhom2/RHBDF2 (via cytoplasmic N-termini); this interaction leads to mutual protein stabilization. Interacts with ADAM17; this interaction is indirect and mediated by iRhom proteins. Interacts with LRP6; this interaction affects LRP6-binding to AXIN1. Widely expressed, with high expression in heart and spleen.

The protein localises to the cytoplasm. The protein resides in the cytosol. It localises to the cell membrane. Promotes the cell surface stability of iRhom1/RHBDF1 and iRhom2/RHBDF2 and prevents their degradation via the endolysosomal pathway. By acting on iRhoms, involved in ADAM17-mediated shedding of TNF, amphiregulin/AREG, HBEGF and TGFA from the cell surface. Negatively regulates Wnt signaling, possibly by antagonizing the recruitment of AXIN1 to LRP6. The protein is FERM domain-containing protein 8 (FRMD8) of Homo sapiens (Human).